A 189-amino-acid chain; its full sequence is Thymidine kinase (189 aa).

Residues 9–16 (GTMNSGKT) and 85–88 (DESQ) contribute to the ATP site. Residue Glu-86 is the Proton acceptor of the active site. Zn(2+)-binding residues include Cys-143, Cys-146, Cys-180, and His-183.

This sequence belongs to the thymidine kinase family. As to quaternary structure, homotetramer.

The protein resides in the cytoplasm. It carries out the reaction thymidine + ATP = dTMP + ADP + H(+). This chain is Thymidine kinase, found in Streptococcus pyogenes serotype M6 (strain ATCC BAA-946 / MGAS10394).